A 229-amino-acid polypeptide reads, in one-letter code: Protein MC132 (229 aa).

As to quaternary structure, interacts with host RELA (via RHD domain), ELOB, ELOC and CUL5; these interactions induce the proteasomal degradation of host RELA.

The protein resides in the host cytoplasm. Its function is as follows. Inhibits host NF-kappa-B activation stimulated by IL-1 and multiple PRR viral detection pathways. Targets host NF-kappa-B component RELA/p65 for ubiquitin-dependent proteasomal degradation. The protein is Protein MC132 (MC132) of Homo sapiens (Human).